Reading from the N-terminus, the 129-residue chain is Regulator of ribonuclease activity B (129 aa).

The protein belongs to the RraB family. In terms of assembly, interacts with the C-terminal region of Rne.

The protein resides in the cytoplasm. Functionally, globally modulates RNA abundance by binding to RNase E (Rne) and regulating its endonucleolytic activity. Can modulate Rne action in a substrate-dependent manner by altering the composition of the degradosome. The chain is Regulator of ribonuclease activity B from Shewanella denitrificans (strain OS217 / ATCC BAA-1090 / DSM 15013).